The following is a 763-amino-acid chain: Lysine-specific histone demethylase 1 homolog 2 (763 aa).

The SWIRM domain maps to 53–152; that stretch reads QRETETEALI…FGVSAAFPAS (100 aa). FAD-binding residues include E192, R194, R200, and E571.

It belongs to the flavin monoamine oxidase family. FAD serves as cofactor.

In terms of biological role, probable histone demethylase. This Oryza sativa subsp. japonica (Rice) protein is Lysine-specific histone demethylase 1 homolog 2.